Consider the following 398-residue polypeptide: Bifunctional enzyme IspD/IspF (398 aa).

Positions 1-234 (MAKSQRTAVV…ARLAAQLGDI (234 aa)) are 2-C-methyl-D-erythritol 4-phosphate cytidylyltransferase. Residues 235–398 (RTGTGYDVHA…LPFNEKTWSV (164 aa)) form a 2-C-methyl-D-erythritol 2,4-cyclodiphosphate synthase region. Residues Asp241 and His243 each contribute to the a divalent metal cation site. Residues 241–243 (DVH) and 267–268 (HS) each bind 4-CDP-2-C-methyl-D-erythritol 2-phosphate. His275 is an a divalent metal cation binding site. Residues 289-291 (DIG), 365-368 (TTSE), Phe372, and Arg375 each bind 4-CDP-2-C-methyl-D-erythritol 2-phosphate.

It in the N-terminal section; belongs to the IspD/TarI cytidylyltransferase family. IspD subfamily. This sequence in the C-terminal section; belongs to the IspF family. It depends on a divalent metal cation as a cofactor.

The catalysed reaction is 2-C-methyl-D-erythritol 4-phosphate + CTP + H(+) = 4-CDP-2-C-methyl-D-erythritol + diphosphate. The enzyme catalyses 4-CDP-2-C-methyl-D-erythritol 2-phosphate = 2-C-methyl-D-erythritol 2,4-cyclic diphosphate + CMP. It functions in the pathway isoprenoid biosynthesis; isopentenyl diphosphate biosynthesis via DXP pathway; isopentenyl diphosphate from 1-deoxy-D-xylulose 5-phosphate: step 2/6. It participates in isoprenoid biosynthesis; isopentenyl diphosphate biosynthesis via DXP pathway; isopentenyl diphosphate from 1-deoxy-D-xylulose 5-phosphate: step 4/6. In terms of biological role, bifunctional enzyme that catalyzes the formation of 4-diphosphocytidyl-2-C-methyl-D-erythritol from CTP and 2-C-methyl-D-erythritol 4-phosphate (MEP) (IspD), and catalyzes the conversion of 4-diphosphocytidyl-2-C-methyl-D-erythritol 2-phosphate (CDP-ME2P) to 2-C-methyl-D-erythritol 2,4-cyclodiphosphate (ME-CPP) with a corresponding release of cytidine 5-monophosphate (CMP) (IspF). The sequence is that of Bifunctional enzyme IspD/IspF from Bradyrhizobium diazoefficiens (strain JCM 10833 / BCRC 13528 / IAM 13628 / NBRC 14792 / USDA 110).